The following is a 97-amino-acid chain: Large ribosomal subunit protein bL36m (97 aa).

The protein belongs to the bacterial ribosomal protein bL36 family. In terms of assembly, component of the mitochondrial ribosome large subunit (39S) which comprises a 16S rRNA and about 50 distinct proteins.

It is found in the mitochondrion. The polypeptide is Large ribosomal subunit protein bL36m (Mrpl36) (Rattus norvegicus (Rat)).